An 88-amino-acid polypeptide reads, in one-letter code: Exodeoxyribonuclease 7 small subunit (88 aa).

This sequence belongs to the XseB family. As to quaternary structure, heterooligomer composed of large and small subunits.

The protein resides in the cytoplasm. It catalyses the reaction Exonucleolytic cleavage in either 5'- to 3'- or 3'- to 5'-direction to yield nucleoside 5'-phosphates.. Its function is as follows. Bidirectionally degrades single-stranded DNA into large acid-insoluble oligonucleotides, which are then degraded further into small acid-soluble oligonucleotides. The protein is Exodeoxyribonuclease 7 small subunit of Tolumonas auensis (strain DSM 9187 / NBRC 110442 / TA 4).